The sequence spans 181 residues: NADH-quinone oxidoreductase subunit B (181 aa).

[4Fe-4S] cluster is bound by residues C60, C61, C125, and C155.

This sequence belongs to the complex I 20 kDa subunit family. As to quaternary structure, NDH-1 is composed of 14 different subunits. Subunits NuoB, C, D, E, F, and G constitute the peripheral sector of the complex. [4Fe-4S] cluster serves as cofactor.

It localises to the cell inner membrane. It catalyses the reaction a quinone + NADH + 5 H(+)(in) = a quinol + NAD(+) + 4 H(+)(out). Its function is as follows. NDH-1 shuttles electrons from NADH, via FMN and iron-sulfur (Fe-S) centers, to quinones in the respiratory chain. Couples the redox reaction to proton translocation (for every two electrons transferred, four hydrogen ions are translocated across the cytoplasmic membrane), and thus conserves the redox energy in a proton gradient. The polypeptide is NADH-quinone oxidoreductase subunit B (Novosphingobium aromaticivorans (strain ATCC 700278 / DSM 12444 / CCUG 56034 / CIP 105152 / NBRC 16084 / F199)).